The sequence spans 768 residues: Phosphoribosylformylglycinamidine synthase subunit PurL (768 aa).

Histidine 48 is a catalytic residue. 2 residues coordinate ATP: tyrosine 51 and lysine 90. Residue glutamate 92 coordinates Mg(2+). Substrate contacts are provided by residues 93–96 (SHNH) and arginine 115. Histidine 94 serves as the catalytic Proton acceptor. Position 116 (aspartate 116) interacts with Mg(2+). Residue glutamine 239 coordinates substrate. A Mg(2+)-binding site is contributed by aspartate 267. 311-313 (ESQ) serves as a coordination point for substrate. 2 residues coordinate ATP: aspartate 507 and glycine 544. Asparagine 545 provides a ligand contact to Mg(2+). Serine 547 serves as a coordination point for substrate.

It belongs to the FGAMS family. Monomer. Part of the FGAM synthase complex composed of 1 PurL, 1 PurQ and 2 PurS subunits.

Its subcellular location is the cytoplasm. It catalyses the reaction N(2)-formyl-N(1)-(5-phospho-beta-D-ribosyl)glycinamide + L-glutamine + ATP + H2O = 2-formamido-N(1)-(5-O-phospho-beta-D-ribosyl)acetamidine + L-glutamate + ADP + phosphate + H(+). Its pathway is purine metabolism; IMP biosynthesis via de novo pathway; 5-amino-1-(5-phospho-D-ribosyl)imidazole from N(2)-formyl-N(1)-(5-phospho-D-ribosyl)glycinamide: step 1/2. In terms of biological role, part of the phosphoribosylformylglycinamidine synthase complex involved in the purines biosynthetic pathway. Catalyzes the ATP-dependent conversion of formylglycinamide ribonucleotide (FGAR) and glutamine to yield formylglycinamidine ribonucleotide (FGAM) and glutamate. The FGAM synthase complex is composed of three subunits. PurQ produces an ammonia molecule by converting glutamine to glutamate. PurL transfers the ammonia molecule to FGAR to form FGAM in an ATP-dependent manner. PurS interacts with PurQ and PurL and is thought to assist in the transfer of the ammonia molecule from PurQ to PurL. This chain is Phosphoribosylformylglycinamidine synthase subunit PurL, found in Parasynechococcus marenigrum (strain WH8102).